Here is a 279-residue protein sequence, read N- to C-terminus: Movement protein (279 aa).

It belongs to the cucumovirus movement protein family.

The protein localises to the host cell junction. The protein resides in the host plasmodesma. Its function is as follows. Transports viral genome to neighboring plant cells directly through plasmosdesmata, without any budding. The movement protein allows efficient cell to cell propagation, by bypassing the host cell wall barrier. Acts by forming a tubular structure at the host plasmodesmata, enlarging it enough to allow free passage of virion capsids. The protein is Movement protein of Cucumber mosaic virus (strain M) (CMV).